The chain runs to 327 residues: MSERHLPDDQSSTIDPYLITSVRQTLAEQSAALQNLSKQLDSGQYQRVLNLIMNCKGHVILSGMGKSGHVGRKISATLASTGTPSFFIHPAEAFHGDLGMITPYDLLILISASGETDEILKLVPSLKNFGNRIIAITNNGNSTLAKNADAVLELHMANETCPNNLAPTTSTTLTMAIGDALAIAMIHQRKFMPNDFARYHPGGSLGRRLLTRVADVMQHDVPAVQLDASFKTVIQRITSGCQGMVMVEDAEGGLAGIITDGDLRRFMEKEGSLTSATAAQMMTREPLTLPEDTMIIEAEEKMQKHRVSTLLVTNKANKVTGLVRIFD.

The SIS domain maps to 48 to 191; it reads VLNLIMNCKG…AIAMIHQRKF (144 aa). Position 63–68 (63–68) interacts with ATP; that stretch reads GMGKSG. Residues 82-83, H89, H95, 121-130, and 155-157 each bind substrate; these read GT, KLVPSLKNFG, and HMA. H89 serves as a coordination point for Zn(2+). CBS domains lie at 217 to 273 and 282 to 327; these read MQHD…EGSL and MTRE…RIFD.

As to quaternary structure, homotetramer.

It catalyses the reaction D-arabinose 5-phosphate = D-ribulose 5-phosphate. Inhibited by 10 uM zinc, cadmium or mercury ions. In terms of biological role, involved in the biosynthesis of K-antigen capsules. Catalyzes the reversible aldol-ketol isomerization between D-ribulose 5-phosphate (Ru5P) and D-arabinose 5-phosphate (A5P). The protein is Arabinose 5-phosphate isomerase KpsF of Escherichia coli O6:H1 (strain CFT073 / ATCC 700928 / UPEC).